The sequence spans 472 residues: Interferon-induced protein with tetratricopeptide repeats 2 (472 aa).

Ser2 carries the post-translational modification N-acetylserine. TPR repeat units lie at residues 51 to 89 (ATMC…ADQA), 90 to 135 (EIRS…RIES), 136 to 171 (PELD…KPKN), 172 to 208 (PEFT…NPDN), 247 to 280 (TDVL…IPNN), 281 to 335 (AYLH…NLFR), 336 to 366 (VCSI…KELT), 367 to 405 (PVAK…NQKS), and 406 to 448 (REKE…KMQQ). Residues 446 to 472 (MQQADEDSERGLESGSLIPSASSWNGE) form a disordered region. The span at 462–472 (LIPSASSWNGE) shows a compositional bias: polar residues.

The protein belongs to the IFIT family. As to quaternary structure, domain-swapped homodimer. Component of an interferon-dependent multiprotein complex, at least composed of IFIT1, IFIT2 and IFIT3. Interacts with IFIT1 and IFIT3. Interacts with STING1/MITA and disrupts its interaction with MAVS or TBK1. Interacts with EIF3E and EIF3C.

Its subcellular location is the cytoplasm. The protein resides in the endoplasmic reticulum. Its function is as follows. IFN-induced antiviral protein which inhibits expression of viral messenger RNAs lacking 2'-O-methylation of the 5' cap. The ribose 2'-O-methylation would provide a molecular signature to distinguish between self and non-self mRNAs by the host during viral infection. Viruses evolved several ways to evade this restriction system such as encoding their own 2'-O-methylase for their mRNAs or by stealing host cap containing the 2'-O-methylation (cap snatching mechanism). Binds AU-rich viral RNAs, with or without 5' triphosphorylation, RNA-binding is required for antiviral activity. Can promote apoptosis. The polypeptide is Interferon-induced protein with tetratricopeptide repeats 2 (IFIT2) (Homo sapiens (Human)).